Here is a 213-residue protein sequence, read N- to C-terminus: Dimethylamine corrinoid protein (213 aa).

A B12-binding N-terminal domain is found at 1-90; the sequence is MSKEELLQEL…LMPEGASGSK (90 aa). The 123-residue stretch at 91–213 folds into the B12-binding domain; sequence LGVIVNGTVE…AVAKAKELLA (123 aa). A methylcob(III)alamin-binding site is contributed by H104.

Belongs to the methylamine corrinoid protein family. In terms of assembly, copurifies with MtbA.

The protein operates within one-carbon metabolism; methanogenesis from dimethylamine. Functionally, acts as a methyl group carrier between MtbB1 and MtbA. Binds 1 corrinoid cofactor per protein, is subsequently demethylated by MtbA. This chain is Dimethylamine corrinoid protein, found in Methanosarcina barkeri.